Consider the following 305-residue polypeptide: tRNA dimethylallyltransferase (305 aa).

14-21 (GPTTSGKT) lines the ATP pocket. 16–21 (TTSGKT) lines the substrate pocket. Interaction with substrate tRNA stretches follow at residues 39-42 (DSAL), 163-167 (QRITR), and 243-248 (RCVGYR).

Belongs to the IPP transferase family. Monomer. The cofactor is Mg(2+).

It catalyses the reaction adenosine(37) in tRNA + dimethylallyl diphosphate = N(6)-dimethylallyladenosine(37) in tRNA + diphosphate. Functionally, catalyzes the transfer of a dimethylallyl group onto the adenine at position 37 in tRNAs that read codons beginning with uridine, leading to the formation of N6-(dimethylallyl)adenosine (i(6)A). This Ruthia magnifica subsp. Calyptogena magnifica protein is tRNA dimethylallyltransferase.